Reading from the N-terminus, the 812-residue chain is ATP-dependent DNA helicase PIF3 (812 aa).

247–254 (GSAGTGKT) contacts ATP. Residues 741 to 761 (HLVYVACSRVRSMDQLIVRNV) mediate DNA binding.

It belongs to the helicase family. PIF1 subfamily. In terms of assembly, monomer. Requires Mg(2+) as cofactor.

Its subcellular location is the cytoplasm. It carries out the reaction Couples ATP hydrolysis with the unwinding of duplex DNA at the replication fork by translocating in the 5'-3' direction. This creates two antiparallel DNA single strands (ssDNA). The leading ssDNA polymer is the template for DNA polymerase III holoenzyme which synthesizes a continuous strand.. It catalyses the reaction ATP + H2O = ADP + phosphate + H(+). In terms of biological role, DNA-dependent ATPase and 5'-3' DNA helicase required for the maintenance of genome stability. The protein is ATP-dependent DNA helicase PIF3 of Trypanosoma brucei brucei (strain 927/4 GUTat10.1).